We begin with the raw amino-acid sequence, 725 residues long: Catalase B (725 aa).

The N-terminal stretch at 1 to 15 is a signal peptide; sequence MRALSLASLIGIASA. Positions 16 to 27 are excised as a propeptide; sequence ACPYMTGELERR. Asn-50 is a glycosylation site (N-linked (GlcNAc...) asparagine). The active site involves His-101. Asn-119 carries N-linked (GlcNAc...) asparagine glycosylation. The active site involves Asn-174. Tyr-388 lines the heme pocket. N-linked (GlcNAc...) asparagine glycosylation is found at Asn-447, Asn-550, and Asn-645.

The protein belongs to the catalase family. Homotetramer. Heme serves as cofactor.

The protein localises to the secreted. The enzyme catalyses 2 H2O2 = O2 + 2 H2O. Occurs in almost all aerobically respiring organisms and serves to protect cells from the toxic effects of hydrogen peroxide through its degradation into water and oxygen. This chain is Catalase B (catB), found in Aspergillus oryzae (strain ATCC 42149 / RIB 40) (Yellow koji mold).